Consider the following 165-residue polypeptide: Ribosome maturation factor RimM (165 aa).

Residues 94–165 form the PRC barrel domain; that stretch reads EDEFYIADLT…YVILNYQREA (72 aa).

The protein belongs to the RimM family. In terms of assembly, binds ribosomal protein uS19.

The protein resides in the cytoplasm. In terms of biological role, an accessory protein needed during the final step in the assembly of 30S ribosomal subunit, possibly for assembly of the head region. Essential for efficient processing of 16S rRNA. May be needed both before and after RbfA during the maturation of 16S rRNA. It has affinity for free ribosomal 30S subunits but not for 70S ribosomes. In Rickettsia rickettsii (strain Sheila Smith), this protein is Ribosome maturation factor RimM.